Here is a 535-residue protein sequence, read N- to C-terminus: Phosphoenolpyruvate carboxykinase (ATP) (535 aa).

Positions 59, 201, and 207 each coordinate substrate. ATP contacts are provided by residues Lys207, His226, and 243–251; that span reads GLSGTGKTT. Mn(2+) is bound by residues Lys207 and His226. Asp264 is a binding site for Mn(2+). ATP is bound by residues Glu292, Arg328, 444–445, and Thr450; that span reads RI. Arg328 is a binding site for substrate.

It belongs to the phosphoenolpyruvate carboxykinase (ATP) family. Requires Mn(2+) as cofactor.

It is found in the cytoplasm. It catalyses the reaction oxaloacetate + ATP = phosphoenolpyruvate + ADP + CO2. It functions in the pathway carbohydrate biosynthesis; gluconeogenesis. Involved in the gluconeogenesis. Catalyzes the conversion of oxaloacetate (OAA) to phosphoenolpyruvate (PEP) through direct phosphoryl transfer between the nucleoside triphosphate and OAA. In Bacteroides thetaiotaomicron (strain ATCC 29148 / DSM 2079 / JCM 5827 / CCUG 10774 / NCTC 10582 / VPI-5482 / E50), this protein is Phosphoenolpyruvate carboxykinase (ATP).